Reading from the N-terminus, the 186-residue chain is Holliday junction branch migration complex subunit RuvA (186 aa).

The segment at Met-1–Asn-61 is domain I. Residues Asp-62 to Lys-134 form a domain II region. Residues Lys-134–Ile-135 are flexible linker. Residues Ile-136–Ile-186 form a domain III region.

This sequence belongs to the RuvA family. Homotetramer. Forms an RuvA(8)-RuvB(12)-Holliday junction (HJ) complex. HJ DNA is sandwiched between 2 RuvA tetramers; dsDNA enters through RuvA and exits via RuvB. An RuvB hexamer assembles on each DNA strand where it exits the tetramer. Each RuvB hexamer is contacted by two RuvA subunits (via domain III) on 2 adjacent RuvB subunits; this complex drives branch migration. In the full resolvosome a probable DNA-RuvA(4)-RuvB(12)-RuvC(2) complex forms which resolves the HJ.

Its subcellular location is the cytoplasm. Functionally, the RuvA-RuvB-RuvC complex processes Holliday junction (HJ) DNA during genetic recombination and DNA repair, while the RuvA-RuvB complex plays an important role in the rescue of blocked DNA replication forks via replication fork reversal (RFR). RuvA specifically binds to HJ cruciform DNA, conferring on it an open structure. The RuvB hexamer acts as an ATP-dependent pump, pulling dsDNA into and through the RuvAB complex. HJ branch migration allows RuvC to scan DNA until it finds its consensus sequence, where it cleaves and resolves the cruciform DNA. This Phytoplasma mali (strain AT) protein is Holliday junction branch migration complex subunit RuvA.